The primary structure comprises 246 residues: Carboxymethylenebutenolidase homolog (246 aa).

Residues C132, D179, and H212 contribute to the active site.

It belongs to the dienelactone hydrolase family.

Its subcellular location is the cytoplasm. It localises to the cytosol. Cysteine hydrolase. The sequence is that of Carboxymethylenebutenolidase homolog (cmbl) from Xenopus tropicalis (Western clawed frog).